Reading from the N-terminus, the 223-residue chain is Phosphoribosylformylglycinamidine synthase subunit PurQ (223 aa).

One can recognise a Glutamine amidotransferase type-1 domain in the interval 4 to 223; the sequence is KIGVITFPGT…FLSAIGTIAA (220 aa). The Nucleophile role is filled by Cys-87. Active-site residues include His-195 and Glu-197.

As to quaternary structure, part of the FGAM synthase complex composed of 1 PurL, 1 PurQ and 2 PurS subunits.

The protein resides in the cytoplasm. It catalyses the reaction N(2)-formyl-N(1)-(5-phospho-beta-D-ribosyl)glycinamide + L-glutamine + ATP + H2O = 2-formamido-N(1)-(5-O-phospho-beta-D-ribosyl)acetamidine + L-glutamate + ADP + phosphate + H(+). It carries out the reaction L-glutamine + H2O = L-glutamate + NH4(+). It functions in the pathway purine metabolism; IMP biosynthesis via de novo pathway; 5-amino-1-(5-phospho-D-ribosyl)imidazole from N(2)-formyl-N(1)-(5-phospho-D-ribosyl)glycinamide: step 1/2. Functionally, part of the phosphoribosylformylglycinamidine synthase complex involved in the purines biosynthetic pathway. Catalyzes the ATP-dependent conversion of formylglycinamide ribonucleotide (FGAR) and glutamine to yield formylglycinamidine ribonucleotide (FGAM) and glutamate. The FGAM synthase complex is composed of three subunits. PurQ produces an ammonia molecule by converting glutamine to glutamate. PurL transfers the ammonia molecule to FGAR to form FGAM in an ATP-dependent manner. PurS interacts with PurQ and PurL and is thought to assist in the transfer of the ammonia molecule from PurQ to PurL. This chain is Phosphoribosylformylglycinamidine synthase subunit PurQ, found in Corynebacterium efficiens (strain DSM 44549 / YS-314 / AJ 12310 / JCM 11189 / NBRC 100395).